Here is an 879-residue protein sequence, read N- to C-terminus: Metabotropic glutamate receptor 3 (879 aa).

Residues 1-24 form the signal peptide; the sequence is MKMLTRLQVLTLALFSKGFLLSLG. Over 25-577 the chain is Extracellular; sequence DHNFLRREIK…DYIRWEDAWA (553 aa). C57 and C99 are joined by a disulfide. L-glutamate contacts are provided by residues S151 and 172–174; that span reads AST. An N-linked (GlcNAc...) asparagine glycan is attached at N209. Residue Y222 coordinates L-glutamate. Disulfide bonds link C240–C527, C361–C373, C412–C419, C509–C528, C513–C531, C534–C546, and C549–C562. N292 carries an N-linked (GlcNAc...) asparagine glycan. D301 serves as a coordination point for L-glutamate. K389 provides a ligand contact to L-glutamate. 2 N-linked (GlcNAc...) asparagine glycosylation sites follow: N414 and N439. Residues 578–598 form a helical membrane-spanning segment; sequence IGPVTIACLGFMCTCMVITVF. The Cytoplasmic portion of the chain corresponds to 599 to 613; sequence IKHNNTPLVKASGRE. Residues 614–634 form a helical membrane-spanning segment; it reads LCYILLFGVGLSYCMTFFFIA. Residues 635-688 lie on the Extracellular side of the membrane; it reads KPSPVICALRRLGLGSSFAICYSALLTKTNCIARIFDGVKNGAQRPKFISPSSQ. Residues 689 to 709 traverse the membrane as a helical segment; the sequence is VFICLGLILVQIVMVSVWLIL. Over 710 to 735 the chain is Cytoplasmic; sequence EAPGTRRYTLAEKRETVILKCNVKDS. A helical membrane pass occupies residues 736–756; it reads SMLISLTYDVILVILCTVYAF. The Extracellular segment spans residues 757–769; it reads KTRKCPENFNEAK. The helical transmembrane segment at 770–790 threads the bilayer; that stretch reads FIGFTMYTTCIIWLAFLPIFY. The Cytoplasmic segment spans residues 791-807; it reads VTSSDYRVQTTTMCISV. The chain crosses the membrane as a helical span at residues 808–828; sequence SLSGFVVLGCLFAPKVHIILF. Residues 829-879 are Extracellular-facing; sequence QPQKNVVTHRLHLNRFSVSGTGTTYSQSSASMYVPTVCNGREVLDSTTSSL.

Belongs to the G-protein coupled receptor 3 family. Interacts with TAMALIN.

The protein resides in the cell membrane. In terms of biological role, G-protein coupled receptor for glutamate. Ligand binding causes a conformation change that triggers signaling via guanine nucleotide-binding proteins (G proteins) and modulates the activity of down-stream effectors. Signaling inhibits adenylate cyclase activity. The protein is Metabotropic glutamate receptor 3 (GRM3) of Macaca fascicularis (Crab-eating macaque).